Here is a 307-residue protein sequence, read N- to C-terminus: Pantothenate kinase (307 aa).

87–94 (GSVAVGKS) provides a ligand contact to ATP.

This sequence belongs to the prokaryotic pantothenate kinase family.

It is found in the cytoplasm. The enzyme catalyses (R)-pantothenate + ATP = (R)-4'-phosphopantothenate + ADP + H(+). Its pathway is cofactor biosynthesis; coenzyme A biosynthesis; CoA from (R)-pantothenate: step 1/5. This is Pantothenate kinase from Vibrio vulnificus (strain YJ016).